Here is a 333-residue protein sequence, read N- to C-terminus: Glyceraldehyde-3-phosphate dehydrogenase (333 aa).

Residues 11–12 (RI), Asp35, and Thr121 each bind NAD(+). Residues 151-153 (SCT) and Thr182 each bind D-glyceraldehyde 3-phosphate. Cys152 functions as the Nucleophile in the catalytic mechanism. Asn183 lines the NAD(+) pocket. D-glyceraldehyde 3-phosphate contacts are provided by residues Arg197, 210-211 (TG), and Arg233. An NAD(+)-binding site is contributed by Asn315.

It belongs to the glyceraldehyde-3-phosphate dehydrogenase family. As to quaternary structure, homotetramer.

The protein resides in the cytoplasm. It catalyses the reaction D-glyceraldehyde 3-phosphate + phosphate + NAD(+) = (2R)-3-phospho-glyceroyl phosphate + NADH + H(+). It participates in carbohydrate degradation; glycolysis; pyruvate from D-glyceraldehyde 3-phosphate: step 1/5. Catalyzes the oxidative phosphorylation of glyceraldehyde 3-phosphate (G3P) to 1,3-bisphosphoglycerate (BPG) using the cofactor NAD. The first reaction step involves the formation of a hemiacetal intermediate between G3P and a cysteine residue, and this hemiacetal intermediate is then oxidized to a thioester, with concomitant reduction of NAD to NADH. The reduced NADH is then exchanged with the second NAD, and the thioester is attacked by a nucleophilic inorganic phosphate to produce BPG. The chain is Glyceraldehyde-3-phosphate dehydrogenase (gap) from Thermotoga maritima (strain ATCC 43589 / DSM 3109 / JCM 10099 / NBRC 100826 / MSB8).